A 229-amino-acid polypeptide reads, in one-letter code: Ribonuclease 3 (229 aa).

Residues 4 to 133 (WEELQESVGF…FIGALYLDNG (130 aa)) form the RNase III domain. Glu46 contributes to the Mg(2+) binding site. The active site involves Asp50. Asp119 and Glu122 together coordinate Mg(2+). The active site involves Glu122. Positions 159–228 (DYKTQLQEIV…AQFAINKLIH (70 aa)) constitute a DRBM domain.

This sequence belongs to the ribonuclease III family. In terms of assembly, homodimer. It depends on Mg(2+) as a cofactor.

The protein resides in the cytoplasm. It catalyses the reaction Endonucleolytic cleavage to 5'-phosphomonoester.. In terms of biological role, digests double-stranded RNA. Involved in the processing of primary rRNA transcript to yield the immediate precursors to the large and small rRNAs (23S and 16S). Processes some mRNAs, and tRNAs when they are encoded in the rRNA operon. Processes pre-crRNA and tracrRNA of type II CRISPR loci if present in the organism. The chain is Ribonuclease 3 from Listeria monocytogenes serovar 1/2a (strain ATCC BAA-679 / EGD-e).